Consider the following 977-residue polypeptide: Disks large-associated protein 1 (977 aa).

Disordered stretches follow at residues 150 to 203 (TKSH…GWWS) and 349 to 371 (KAMGDEDSGDSDTSPKPSPKVAA). Ser169, Ser356, Ser359, Ser362, Ser366, Ser383, Ser412, Ser415, Ser419, Ser422, Ser431, Ser503, Ser510, and Ser562 each carry phosphoserine. Thr563 is modified (phosphothreonine). 2 positions are modified to phosphoserine: Ser565 and Ser589. Position 590 is a phosphothreonine (Thr590). Phosphoserine occurs at positions 592 and 595. 2 interaction with DYL2 regions span residues 650-661 (LSIGIQVDDAEE) and 672-683 (SKFQSVGVQVEE). Residues 899-965 (WKQMDPLDKK…QNSATESAES (67 aa)) are disordered. 2 stretches are compositionally biased toward basic and acidic residues: residues 903-912 (DPLDKKERRA) and 928-943 (IRERSLESSQRQEARK). Ser932 is subject to Phosphoserine. The segment covering 954–963 (VRQNSATESA) has biased composition (polar residues). The short motif at 975–977 (TRL) is the PDZ-binding element.

The protein belongs to the SAPAP family. As to quaternary structure, interacts with guanylate kinase-like domain of DLG1, DLG2, DLG3, DLG4 and AIP1. Interacts with the PDZ domain of SHANK1, SHANK2 and SHANK3. Found in a complex with DLG4 and SHANK1, SHANK2 or SHANK3. Found in a complex with DLG4 and BEGAIN. Interacts with DYL2 and LRFN1. Interacts with MPP2 (via the SH3-Guanylate kinase-like sub-module). Ubiquitinated by TRIM3; leading to proteasomal degradation. Expressed in brain.

It localises to the cell membrane. It is found in the postsynaptic density. The protein resides in the synapse. Functionally, part of the postsynaptic scaffold in neuronal cells. This Homo sapiens (Human) protein is Disks large-associated protein 1 (DLGAP1).